The sequence spans 134 residues: ATP synthase epsilon chain (134 aa).

The protein belongs to the ATPase epsilon chain family. F-type ATPases have 2 components, CF(1) - the catalytic core - and CF(0) - the membrane proton channel. CF(1) has five subunits: alpha(3), beta(3), gamma(1), delta(1), epsilon(1). CF(0) has three main subunits: a, b and c. In this bacterium the a and b subunits are transcribed but do not seem to be translated, thus the ATP synthase consists of the alpha, beta, gamma, delta, epsilon and c subunits.

Its subcellular location is the cell membrane. Functionally, produces ATP from ADP in the presence of a proton gradient across the membrane. The protein is ATP synthase epsilon chain of Moorella thermoacetica (strain ATCC 39073 / JCM 9320).